We begin with the raw amino-acid sequence, 186 residues long: Ribosome-recycling factor (186 aa).

The protein belongs to the RRF family.

It is found in the cytoplasm. Responsible for the release of ribosomes from messenger RNA at the termination of protein biosynthesis. May increase the efficiency of translation by recycling ribosomes from one round of translation to another. The chain is Ribosome-recycling factor from Herminiimonas arsenicoxydans.